We begin with the raw amino-acid sequence, 353 residues long: MGLLLSYLFGYIFYSVNKKFHIMEKFGASNSIVNNGPVSIFAYCASSILMTVTNKFVVGAYEFNLNFFLLAVQAAVCLVTIATLKGLGIITYRQFNKDEAKKWFPIAFLLVLMIYTSSKALQYLSIPVYTIFKNLTIILIAYGEVIWFGGKVTTMALGSFILMVLSSVIAYYGDTAETGEKTAEMHLLYLGYAWMFTNCFSSAAFVLIMRKRIKLTNFKDFDTMYYNNLLSLPLLLVFSFLFEDWSSVNLNKNFPPDNRNTTIFVMILSGASSVGISYCSAWCVRVTSSTTYSMVGALNKLPIALSGLVFFNAAVNFWSVSSIFVGFLAGVFYAVAKQKQQKENAQQLPVANK.

At 1–31 (MGLLLSYLFGYIFYSVNKKFHIMEKFGASNS) the chain is on the cytoplasmic side. Residues 32–52 (IVNNGPVSIFAYCASSILMTV) traverse the membrane as a helical segment. The Lumenal segment spans residues 53 to 66 (TNKFVVGAYEFNLN). A helical membrane pass occupies residues 67–87 (FFLLAVQAAVCLVTIATLKGL). The Cytoplasmic segment spans residues 88 to 102 (GIITYRQFNKDEAKK). A helical membrane pass occupies residues 103–122 (WFPIAFLLVLMIYTSSKALQ). The Lumenal segment spans residues 123-125 (YLS). A helical transmembrane segment spans residues 126–148 (IPVYTIFKNLTIILIAYGEVIWF). The Cytoplasmic segment spans residues 149–154 (GGKVTT). A helical membrane pass occupies residues 155–172 (MALGSFILMVLSSVIAYY). At 173–187 (GDTAETGEKTAEMHL) the chain is on the lumenal side. The chain crosses the membrane as a helical span at residues 188-208 (LYLGYAWMFTNCFSSAAFVLI). Residues 209 to 227 (MRKRIKLTNFKDFDTMYYN) lie on the Cytoplasmic side of the membrane. A helical transmembrane segment spans residues 228 to 248 (NLLSLPLLLVFSFLFEDWSSV). Residues 249 to 262 (NLNKNFPPDNRNTT) lie on the Lumenal side of the membrane. Residue Asn-260 is glycosylated (N-linked (GlcNAc...) asparagine). The chain crosses the membrane as a helical span at residues 263-283 (IFVMILSGASSVGISYCSAWC). Residues 284 to 290 (VRVTSST) lie on the Cytoplasmic side of the membrane. A helical transmembrane segment spans residues 291-313 (TYSMVGALNKLPIALSGLVFFNA). At 314-316 (AVN) the chain is on the lumenal side. The helical transmembrane segment at 317–336 (FWSVSSIFVGFLAGVFYAVA) threads the bilayer. Residues 337–353 (KQKQQKENAQQLPVANK) are Cytoplasmic-facing.

It belongs to the TPT transporter family. SLC35D subfamily. As to quaternary structure, homooligomer.

The protein localises to the golgi apparatus membrane. It localises to the cytoplasmic vesicle membrane. The protein resides in the endoplasmic reticulum membrane. Its function is as follows. Involved in the import of GDP-mannose from the cytoplasm into the Golgi lumen. The sequence is that of GDP-mannose transporter (VRG4) from Meyerozyma guilliermondii (strain ATCC 6260 / CBS 566 / DSM 6381 / JCM 1539 / NBRC 10279 / NRRL Y-324) (Yeast).